The chain runs to 223 residues: MRSLACERDERLLFSDLSANFEAGDIVQILGSNGAGKTTLMRIVAGLSDSYTGEVLWNNAPHRGYDFFASVLYFGHATGVKQTLTALENLRWYFGLNGNKNTSAQAIDVSEAQLEAALHKVGLAGYEDVPCHQMSAGQKRRVALARLYCSKAPIWLLDEPFTAIDVGGVQQLESLIRAHAESGGIVLLTSHQPVSVPNLKTVDINQYRPLRGQKSDMAVGNDY.

Residues 1–223 (MRSLACERDE…KSDMAVGNDY (223 aa)) enclose the ABC transporter domain. Position 31 to 38 (31 to 38 (GSNGAGKT)) interacts with ATP.

Belongs to the ABC transporter superfamily. CcmA exporter (TC 3.A.1.107) family. As to quaternary structure, the complex is composed of two ATP-binding proteins (CcmA) and two transmembrane proteins (CcmB).

Its subcellular location is the cell inner membrane. It catalyses the reaction heme b(in) + ATP + H2O = heme b(out) + ADP + phosphate + H(+). Functionally, part of the ABC transporter complex CcmAB involved in the biogenesis of c-type cytochromes; once thought to export heme, this seems not to be the case, but its exact role is uncertain. Responsible for energy coupling to the transport system. The sequence is that of Cytochrome c biogenesis ATP-binding export protein CcmA from Saccharophagus degradans (strain 2-40 / ATCC 43961 / DSM 17024).